Consider the following 489-residue polypeptide: Glutamyl-tRNA(Gln) amidotransferase subunit A (489 aa).

Active-site charge relay system residues include Lys-77 and Ser-152. Ser-176 serves as the catalytic Acyl-ester intermediate.

Belongs to the amidase family. GatA subfamily. In terms of assembly, heterotrimer of A, B and C subunits.

It carries out the reaction L-glutamyl-tRNA(Gln) + L-glutamine + ATP + H2O = L-glutaminyl-tRNA(Gln) + L-glutamate + ADP + phosphate + H(+). Functionally, allows the formation of correctly charged Gln-tRNA(Gln) through the transamidation of misacylated Glu-tRNA(Gln) in organisms which lack glutaminyl-tRNA synthetase. The reaction takes place in the presence of glutamine and ATP through an activated gamma-phospho-Glu-tRNA(Gln). This chain is Glutamyl-tRNA(Gln) amidotransferase subunit A, found in Protochlamydia amoebophila (strain UWE25).